The following is a 189-amino-acid chain: Peptidyl-tRNA hydrolase (189 aa).

Y15 lines the tRNA pocket. H20 functions as the Proton acceptor in the catalytic mechanism. TRNA contacts are provided by F66, N68, and N114.

Belongs to the PTH family. As to quaternary structure, monomer.

Its subcellular location is the cytoplasm. The catalysed reaction is an N-acyl-L-alpha-aminoacyl-tRNA + H2O = an N-acyl-L-amino acid + a tRNA + H(+). Its function is as follows. Hydrolyzes ribosome-free peptidyl-tRNAs (with 1 or more amino acids incorporated), which drop off the ribosome during protein synthesis, or as a result of ribosome stalling. Catalyzes the release of premature peptidyl moieties from peptidyl-tRNA molecules trapped in stalled 50S ribosomal subunits, and thus maintains levels of free tRNAs and 50S ribosomes. The sequence is that of Peptidyl-tRNA hydrolase from Streptococcus sanguinis (strain SK36).